The chain runs to 244 residues: Phosphoadenosine 5'-phosphosulfate reductase (244 aa).

Cys239 acts as the Nucleophile; cysteine thiosulfonate intermediate in catalysis.

Belongs to the PAPS reductase family. CysH subfamily.

It localises to the cytoplasm. The catalysed reaction is [thioredoxin]-disulfide + sulfite + adenosine 3',5'-bisphosphate + 2 H(+) = [thioredoxin]-dithiol + 3'-phosphoadenylyl sulfate. It functions in the pathway sulfur metabolism; hydrogen sulfide biosynthesis; sulfite from sulfate: step 3/3. Functionally, catalyzes the formation of sulfite from phosphoadenosine 5'-phosphosulfate (PAPS) using thioredoxin as an electron donor. The sequence is that of Phosphoadenosine 5'-phosphosulfate reductase from Escherichia coli O8 (strain IAI1).